The primary structure comprises 51 residues: Mitochondrial import receptor subunit TOM5 homolog (51 aa).

An N-acetylmethionine modification is found at Met-1. A Glycyl lysine isopeptide (Lys-Gly) (interchain with G-Cter in SUMO2) cross-link involves residue Lys-10. The chain crosses the membrane as a helical span at residues 27–45; the sequence is SIRNFLIYVALLRVTPYIL.

Belongs to the Tom5 family. Forms part of the preprotein translocase complex of the outer mitochondrial membrane (TOM complex) which consists of at least 7 different proteins (TOMM5, TOMM6, TOMM7, TOMM20, TOMM22, TOMM40 and TOMM70).

The protein resides in the mitochondrion outer membrane. The chain is Mitochondrial import receptor subunit TOM5 homolog from Mus musculus (Mouse).